The chain runs to 239 residues: Ribonuclease HII (239 aa).

Positions 30–221 (GPVAGVDEVG…VRRLVTAGTP (192 aa)) constitute an RNase H type-2 domain. A divalent metal cation is bound by residues Asp36, Glu37, and Asp130.

The protein belongs to the RNase HII family. Requires Mn(2+) as cofactor. Mg(2+) is required as a cofactor.

The protein localises to the cytoplasm. It carries out the reaction Endonucleolytic cleavage to 5'-phosphomonoester.. Functionally, endonuclease that specifically degrades the RNA of RNA-DNA hybrids. The protein is Ribonuclease HII of Mycobacterium sp. (strain JLS).